Here is a 567-residue protein sequence, read N- to C-terminus: Type II secretion system protein E (567 aa).

Residue Gly-325 to Thr-332 participates in ATP binding.

The protein belongs to the GSP E family. Forms homooligomers; most probably hexamers. Interacts with XpsL/GspL.

It is found in the cell inner membrane. The catalysed reaction is ATP + H2O + cellular proteinSide 1 = ADP + phosphate + cellular proteinSide 2.. ATPase component of the type II secretion system required for the energy-dependent secretion of extracellular factors such as proteases and toxins from the periplasm. Acts as a molecular motor to provide the energy that is required for assembly of the pseudopilus and the extrusion of substrates generated in the cytoplasm. In Xanthomonas campestris pv. campestris (strain ATCC 33913 / DSM 3586 / NCPPB 528 / LMG 568 / P 25), this protein is Type II secretion system protein E (xpsE).